Consider the following 586-residue polypeptide: Exocyst complex component EXO70A3 (586 aa).

2 N-linked (GlcNAc...) asparagine glycosylation sites follow: asparagine 65 and asparagine 106. The tract at residues 119-149 (CLPSNLRPPSDDEGSDGKSHDPQSNGLGKTD) is disordered. The chain crosses the membrane as a helical span at residues 258–278 (FAEITTISFGMLLSFGYAIAI). Residues asparagine 321 and asparagine 487 are each glycosylated (N-linked (GlcNAc...) asparagine).

Belongs to the EXO70 family. As to quaternary structure, subunit of the exocyst complex. In terms of tissue distribution, confined to the outer layer of the columella cells in the root tips of young seedlings.

The protein resides in the membrane. Its function is as follows. Component of the exocyst complex involved in the docking of exocytic vesicles with fusion sites on the plasma membrane during regulated or polarized secretion. Involved in PIN4 exocytosis and gravitropic responses in columella cells. By monitoring PIN4 distribution in columella cells, modulates auxin repartition and subsequently regulates the root system architecture (RSA), thus being a component of the auxin-dependent root directional growth (ARD). The chain is Exocyst complex component EXO70A3 from Arabidopsis thaliana (Mouse-ear cress).